The primary structure comprises 433 residues: Glutamyl-tRNA reductase (433 aa).

Substrate is bound by residues 49–52, Ser-114, 119–121, and Gln-125; these read TCNR and EPQ. The active-site Nucleophile is the Cys-50. 201 to 206 provides a ligand contact to NADP(+); the sequence is GAGETI.

Belongs to the glutamyl-tRNA reductase family. Homodimer.

The catalysed reaction is (S)-4-amino-5-oxopentanoate + tRNA(Glu) + NADP(+) = L-glutamyl-tRNA(Glu) + NADPH + H(+). It functions in the pathway porphyrin-containing compound metabolism; protoporphyrin-IX biosynthesis; 5-aminolevulinate from L-glutamyl-tRNA(Glu): step 1/2. Functionally, catalyzes the NADPH-dependent reduction of glutamyl-tRNA(Glu) to glutamate 1-semialdehyde (GSA). This Histophilus somni (strain 2336) (Haemophilus somnus) protein is Glutamyl-tRNA reductase.